The chain runs to 176 residues: Ribosome rescue factor SmrB (176 aa).

A Smr domain is found at 98-173; that stretch reads LDLHGLTQKQ…GTAALLVLVE (76 aa).

It belongs to the SmrB family. In terms of assembly, associates with collided ribosomes, but not with correctly translating polysomes.

Its function is as follows. Acts as a ribosome collision sensor. Detects stalled/collided disomes (pairs of ribosomes where the leading ribosome is stalled and a second ribosome has collided with it) and endonucleolytically cleaves mRNA at the 5' boundary of the stalled ribosome. Stalled/collided disomes form a new interface (primarily via the 30S subunits) that binds SmrB. Cleaved mRNA becomes available for tmRNA ligation, leading to ribosomal subunit dissociation and rescue of stalled ribosomes. The sequence is that of Ribosome rescue factor SmrB from Yersinia enterocolitica serotype O:8 / biotype 1B (strain NCTC 13174 / 8081).